The primary structure comprises 339 residues: Protein LicA (339 aa).

Tandem repeats lie at residues 4 to 7 (INQS), 8 to 11 (INQS), 12 to 15 (INQS), 16 to 19 (INQS), 20 to 23 (INQS), 24 to 27 (INQS), 28 to 31 (INQS), 32 to 35 (INQS), and 36 to 39 (INQS). A 9 X 4 AA tandem repeats of I-N-Q-S region spans residues 4 to 39 (INQSINQSINQSINQSINQSINQSINQSINQSINQS).

Belongs to the peptidase S49 family.

Functionally, mediates phase variation of the LOS 6A2 and 12D9 epitopes. Phase variation of H.influenza LOS epitopes expressed by LicA is determined by a translational switch. This chain is Protein LicA (licA), found in Haemophilus influenzae.